Here is a 390-residue protein sequence, read N- to C-terminus: Protein NDRG4-A (390 aa).

The tract at residues 356 to 390 is disordered; that stretch reads LTSASSVDGSRPRPCTQSESSDGIGQINHTMEVSC. The segment covering 370–390 has biased composition (polar residues); it reads CTQSESSDGIGQINHTMEVSC.

It belongs to the NDRG family.

It localises to the cytoplasm. It is found in the cytosol. Contributes to the maintenance of intracerebral BDNF levels within the normal range. May enhance growth factor-induced ERK1 and ERK2 phosphorylation. May attenuate growth factor-promoted ELK1 phosphorylation in a microtubule-dependent manner. The sequence is that of Protein NDRG4-A (ndrg4-a) from Xenopus laevis (African clawed frog).